The chain runs to 422 residues: Serine--tRNA ligase (422 aa).

Residue 229 to 231 (TAE) participates in L-serine binding. ATP is bound at residue 260–262 (RKE). L-serine is bound at residue Glu283. 347–350 (EISS) is an ATP binding site. An L-serine-binding site is contributed by Ser383.

It belongs to the class-II aminoacyl-tRNA synthetase family. Type-1 seryl-tRNA synthetase subfamily. As to quaternary structure, homodimer. The tRNA molecule binds across the dimer.

It localises to the cytoplasm. It carries out the reaction tRNA(Ser) + L-serine + ATP = L-seryl-tRNA(Ser) + AMP + diphosphate + H(+). It catalyses the reaction tRNA(Sec) + L-serine + ATP = L-seryl-tRNA(Sec) + AMP + diphosphate + H(+). It participates in aminoacyl-tRNA biosynthesis; selenocysteinyl-tRNA(Sec) biosynthesis; L-seryl-tRNA(Sec) from L-serine and tRNA(Sec): step 1/1. In terms of biological role, catalyzes the attachment of serine to tRNA(Ser). Is also able to aminoacylate tRNA(Sec) with serine, to form the misacylated tRNA L-seryl-tRNA(Sec), which will be further converted into selenocysteinyl-tRNA(Sec). In Citrifermentans bemidjiense (strain ATCC BAA-1014 / DSM 16622 / JCM 12645 / Bem) (Geobacter bemidjiensis), this protein is Serine--tRNA ligase.